A 159-amino-acid chain; its full sequence is Elicitor-responsive protein 1 (159 aa).

A C2 domain is found at 1-112 (MAGSGVLEVH…SLGMEHGTWE (112 aa)). Ca(2+)-binding residues include D21 and D30. S44 is modified (phosphoserine; by CPK). Positions 81, 83, 86, and 89 each coordinate Ca(2+).

It depends on Ca(2+) as a cofactor. In terms of processing, phosphorylated at Ser-44 by CPK18 in a calcium-dependent manner. Isoform 2 is expressed in young vascular tissues and tiller buds.

The protein resides in the cytoplasm. Its subcellular location is the cell membrane. May play a role in plant defense signaling. Isoform 2 binds to phospholipids in a Ca(2+)-dependent manner in response to pathogen elicitors. This is Elicitor-responsive protein 1 (ERG1) from Oryza sativa subsp. japonica (Rice).